The following is a 355-amino-acid chain: 3-isopropylmalate dehydrogenase (355 aa).

4 residues coordinate substrate: R90, R100, R128, and D222. Residues D222, D246, and D250 each contribute to the Mg(2+) site. 280 to 292 (GSAPDIAGKGIAN) contributes to the NAD(+) binding site.

Belongs to the isocitrate and isopropylmalate dehydrogenases family. LeuB type 1 subfamily. Homodimer. It depends on Mg(2+) as a cofactor. The cofactor is Mn(2+).

It is found in the cytoplasm. It carries out the reaction (2R,3S)-3-isopropylmalate + NAD(+) = 4-methyl-2-oxopentanoate + CO2 + NADH. It participates in amino-acid biosynthesis; L-leucine biosynthesis; L-leucine from 3-methyl-2-oxobutanoate: step 3/4. Catalyzes the oxidation of 3-carboxy-2-hydroxy-4-methylpentanoate (3-isopropylmalate) to 3-carboxy-4-methyl-2-oxopentanoate. The product decarboxylates to 4-methyl-2 oxopentanoate. The sequence is that of 3-isopropylmalate dehydrogenase from Burkholderia mallei (strain ATCC 23344).